We begin with the raw amino-acid sequence, 77 residues long: Putative Fis-like DNA-binding protein (77 aa).

The segment at residues 53–72 (QSLAADYLGINRNTLRKKLQ) is a DNA-binding region (H-T-H motif).

It belongs to the transcriptional regulatory Fis family.

This Ralstonia nicotianae (strain ATCC BAA-1114 / GMI1000) (Ralstonia solanacearum) protein is Putative Fis-like DNA-binding protein.